The chain runs to 60 residues: Defensin MGD-1 (60 aa).

4 disulfide bridges follow: cysteine 4–cysteine 25, cysteine 10–cysteine 33, cysteine 14–cysteine 35, and cysteine 21–cysteine 38. 3-hydroxytryptophan is present on tryptophan 28. Residue cysteine 38 is modified to Cysteine amide. A propeptide spanning residues 39-60 (GGRREDVEDIFDIFDNEAADRF) is cleaved from the precursor.

Belongs to the invertebrate defensin family. Type 2 subfamily. Post-translationally, the hydroxylation of the Trp-28 is not important for the antibacterial activity. As to expression, abundantly expressed in hemocytes.

It localises to the secreted. Its function is as follows. Active against both Gram-positive and Gram-negative bacteria but is not cytotoxic towards human erythrocytes or protozoa. The polypeptide is Defensin MGD-1 (FH3) (Mytilus galloprovincialis (Mediterranean mussel)).